Here is a 194-residue protein sequence, read N- to C-terminus: Orotate phosphoribosyltransferase (194 aa).

5-phospho-alpha-D-ribose 1-diphosphate-binding positions include Arg-102, Lys-103, Lys-106, His-108, and 129–137 (EDVVTTGGS). Thr-133 and Arg-161 together coordinate orotate.

It belongs to the purine/pyrimidine phosphoribosyltransferase family. PyrE subfamily. Homodimer. It depends on Mg(2+) as a cofactor.

It catalyses the reaction orotidine 5'-phosphate + diphosphate = orotate + 5-phospho-alpha-D-ribose 1-diphosphate. Its pathway is pyrimidine metabolism; UMP biosynthesis via de novo pathway; UMP from orotate: step 1/2. Functionally, catalyzes the transfer of a ribosyl phosphate group from 5-phosphoribose 1-diphosphate to orotate, leading to the formation of orotidine monophosphate (OMP). This chain is Orotate phosphoribosyltransferase, found in Synechococcus sp. (strain CC9902).